Consider the following 158-residue polypeptide: uncharacterized protein (158 aa).

An N-terminal signal peptide occupies residues 1-22 (MKKIPNKLLAVSAFLTITTTYA). A helical transmembrane segment spans residues 120–140 (LTGIIEYDTKFENHYETLVEA).

It is found in the cell membrane. This is an uncharacterized protein from Bacillus cereus.